Here is a 591-residue protein sequence, read N- to C-terminus: Aspartate--tRNA ligase (591 aa).

An L-aspartate-binding site is contributed by Glu-173. The aspartate stretch occupies residues 197–200 (QLFK). Arg-219 contacts L-aspartate. Residues 219–221 (RDE) and Gln-228 contribute to the ATP site. His-448 lines the L-aspartate pocket. ATP is bound at residue Glu-482. Residue Arg-489 participates in L-aspartate binding. 534-537 (GLDR) serves as a coordination point for ATP.

The protein belongs to the class-II aminoacyl-tRNA synthetase family. Type 1 subfamily. Homodimer.

It localises to the cytoplasm. It carries out the reaction tRNA(Asp) + L-aspartate + ATP = L-aspartyl-tRNA(Asp) + AMP + diphosphate. Functionally, catalyzes the attachment of L-aspartate to tRNA(Asp) in a two-step reaction: L-aspartate is first activated by ATP to form Asp-AMP and then transferred to the acceptor end of tRNA(Asp). This is Aspartate--tRNA ligase from Shewanella sp. (strain MR-7).